Consider the following 2293-residue polypeptide: Protein Ycf2 (2293 aa).

Glycine 1647–serine 1654 is a binding site for ATP.

The protein belongs to the Ycf2 family.

Its subcellular location is the plastid. It localises to the chloroplast stroma. In terms of biological role, probable ATPase of unknown function. Its presence in a non-photosynthetic plant (Epifagus virginiana) and experiments in tobacco indicate that it has an essential function which is probably not related to photosynthesis. The polypeptide is Protein Ycf2 (Lobularia maritima (Sweet alyssum)).